The following is a 151-amino-acid chain: Large ribosomal subunit protein bL9 (151 aa).

The protein belongs to the bacterial ribosomal protein bL9 family.

Its function is as follows. Binds to the 23S rRNA. The polypeptide is Large ribosomal subunit protein bL9 (Oenococcus oeni (strain ATCC BAA-331 / PSU-1)).